The chain runs to 493 residues: ATP synthase subunit beta, chloroplastic (493 aa).

170-177 contacts ATP; sequence GGAGVGKT.

It belongs to the ATPase alpha/beta chains family. As to quaternary structure, F-type ATPases have 2 components, CF(1) - the catalytic core - and CF(0) - the membrane proton channel. CF(1) has five subunits: alpha(3), beta(3), gamma(1), delta(1), epsilon(1). CF(0) has four main subunits: a(1), b(1), b'(1) and c(9-12).

The protein resides in the plastid. It is found in the chloroplast thylakoid membrane. The enzyme catalyses ATP + H2O + 4 H(+)(in) = ADP + phosphate + 5 H(+)(out). In terms of biological role, produces ATP from ADP in the presence of a proton gradient across the membrane. The catalytic sites are hosted primarily by the beta subunits. In Adiantum capillus-veneris (Maidenhair fern), this protein is ATP synthase subunit beta, chloroplastic.